Reading from the N-terminus, the 411-residue chain is [Pyruvate dehydrogenase (acetyl-transferring)] kinase isozyme 4, mitochondrial (411 aa).

Residues 138 to 368 (IIEYKDACTV…DAIIYLKALS (231 aa)) form the Histidine kinase domain. Residues 254-261 (ELFKNAMR), aspartate 293, 312-313 (ST), and 329-334 (GFGYGL) each bind ATP.

It belongs to the PDK/BCKDK protein kinase family. In terms of assembly, homodimer. Interacts with the pyruvate dehydrogenase complex subunit DLAT, and is part of the multimeric pyruvate dehydrogenase complex that contains multiple copies of pyruvate dehydrogenase (E1), dihydrolipoamide acetyltransferase (DLAT, E2) and lipoamide dehydrogenase (DLD, E3). As to expression, ubiquitous; highest levels of expression in heart and skeletal muscle.

The protein localises to the mitochondrion matrix. The enzyme catalyses L-seryl-[pyruvate dehydrogenase E1 alpha subunit] + ATP = O-phospho-L-seryl-[pyruvate dehydrogenase E1 alpha subunit] + ADP + H(+). Functionally, kinase that plays a key role in regulation of glucose and fatty acid metabolism and homeostasis via phosphorylation of the pyruvate dehydrogenase subunits PDHA1 and PDHA2. This inhibits pyruvate dehydrogenase activity, and thereby regulates metabolite flux through the tricarboxylic acid cycle, down-regulates aerobic respiration and inhibits the formation of acetyl-coenzyme A from pyruvate. Inhibition of pyruvate dehydrogenase decreases glucose utilization and increases fat metabolism in response to prolonged fasting and starvation. Plays an important role in maintaining normal blood glucose levels under starvation, and is involved in the insulin signaling cascade. Via its regulation of pyruvate dehydrogenase activity, plays an important role in maintaining normal blood pH and in preventing the accumulation of ketone bodies under starvation. In the fed state, mediates cellular responses to glucose levels and to a high-fat diet. Regulates both fatty acid oxidation and de novo fatty acid biosynthesis. Plays a role in the generation of reactive oxygen species. Protects detached epithelial cells against anoikis. Plays a role in cell proliferation via its role in regulating carbohydrate and fatty acid metabolism. This is [Pyruvate dehydrogenase (acetyl-transferring)] kinase isozyme 4, mitochondrial (PDK4) from Homo sapiens (Human).